We begin with the raw amino-acid sequence, 1335 residues long: Mediator of RNA polymerase II transcription subunit 15a (1335 aa).

8 disordered regions span residues 1–27, 109–172, 190–225, 241–389, 401–448, 496–525, 567–591, and 683–815; these read MDNN…TQLP, GTSI…NNNT, QDSS…QQQP, FQSG…QHQQ, IQQQ…TQSN, LYSS…QQLG, SQRT…ANGG, and HRPR…QSNV. 3 stretches are compositionally biased toward polar residues: residues 110–158, 190–207, and 241–257; these read TSID…TALP, QDSS…SGPQ, and FQSG…PSHI. Residues 258-270 are compositionally biased toward low complexity; the sequence is QQQQQNVLQPNQL. Polar residues predominate over residues 271 to 299; that stretch reads HSSQQPGVPTSATQPSTVNSAPLQGLHTN. Low complexity predominate over residues 300 to 314; it reads QQSSPQLSSQQTTQS. A compositionally biased stretch (polar residues) spans 315 to 328; that stretch reads MLRQHQSSMLRQHP. The segment covering 329–362 has biased composition (low complexity); sequence QSQQASGIHQQQSSLPQQSISPLQQQPTQLMRQQ. Residues 363–374 are compositionally biased toward polar residues; sequence AANSSGIQQKQM. Residues 401–436 show a composition bias toward low complexity; that stretch reads IQQQQSQQQPLQQPQQQQKQQPPAQQQLMSQQNSLQ. Polar residues predominate over residues 437 to 448; the sequence is ATHQNPLGTQSN. Positions 498 to 525 are enriched in low complexity; that stretch reads SSQGQQSQNQPSQQQMMPQLQSHHQQLG. Polar residues predominate over residues 567 to 588; the sequence is SQRTLPEMPSSSLDSTAQTESA. Low complexity predominate over residues 688 to 712; that stretch reads PVQQGQLPQSQMQPMQQPQSQTVQD. Composition is skewed to polar residues over residues 716–728, 735–749, and 756–815; these read DNQT…SMSM, AQQS…NVLS, and APQQ…QSNV. A coiled-coil region spans residues 834–882; it reads QDQQMQLKQQFQQRQMQQQQLQARQQQQQQQLQARQQAAQLQQMNDMND. 2 disordered regions span residues 947–986 and 1146–1165; these read KMGT…SSSL and FAGS…GKKA. A compositionally biased stretch (low complexity) spans 957 to 973; sequence SPFVVPSPSSTPLAPSP. The segment covering 1148–1160 has biased composition (polar residues); it reads GSETSDLESTATS.

This sequence belongs to the plant Mediator complex subunit 15 family. Component of the Mediator complex.

Its subcellular location is the nucleus. Its function is as follows. Component of the Mediator complex, a coactivator involved in the regulated transcription of nearly all RNA polymerase II-dependent genes. Mediator functions as a bridge to convey information from gene-specific regulatory proteins to the basal RNA polymerase II transcription machinery. The Mediator complex, having a compact conformation in its free form, is recruited to promoters by direct interactions with regulatory proteins and serves for the assembly of a functional preinitiation complex with RNA polymerase II and the general transcription factors. This Arabidopsis thaliana (Mouse-ear cress) protein is Mediator of RNA polymerase II transcription subunit 15a (MED15A).